Here is a 360-residue protein sequence, read N- to C-terminus: Histidinol-phosphate aminotransferase (360 aa).

At Lys213 the chain carries N6-(pyridoxal phosphate)lysine.

This sequence belongs to the class-II pyridoxal-phosphate-dependent aminotransferase family. Histidinol-phosphate aminotransferase subfamily. As to quaternary structure, homodimer. It depends on pyridoxal 5'-phosphate as a cofactor.

It carries out the reaction L-histidinol phosphate + 2-oxoglutarate = 3-(imidazol-4-yl)-2-oxopropyl phosphate + L-glutamate. The protein operates within amino-acid biosynthesis; L-histidine biosynthesis; L-histidine from 5-phospho-alpha-D-ribose 1-diphosphate: step 7/9. The polypeptide is Histidinol-phosphate aminotransferase (Baumannia cicadellinicola subsp. Homalodisca coagulata).